The primary structure comprises 419 residues: 3-isopropylmalate dehydratase large subunit (419 aa).

Residues cysteine 300, cysteine 360, and cysteine 363 each coordinate [4Fe-4S] cluster.

The protein belongs to the aconitase/IPM isomerase family. LeuC type 2 subfamily. As to quaternary structure, heterodimer of LeuC and LeuD. Requires [4Fe-4S] cluster as cofactor.

The catalysed reaction is (2R,3S)-3-isopropylmalate = (2S)-2-isopropylmalate. The protein operates within amino-acid biosynthesis; L-leucine biosynthesis; L-leucine from 3-methyl-2-oxobutanoate: step 2/4. Catalyzes the isomerization between 2-isopropylmalate and 3-isopropylmalate, via the formation of 2-isopropylmaleate. This is 3-isopropylmalate dehydratase large subunit from Nitratidesulfovibrio vulgaris (strain ATCC 29579 / DSM 644 / CCUG 34227 / NCIMB 8303 / VKM B-1760 / Hildenborough) (Desulfovibrio vulgaris).